We begin with the raw amino-acid sequence, 93 residues long: Small ribosomal subunit protein uS19 (93 aa).

It belongs to the universal ribosomal protein uS19 family.

In terms of biological role, protein S19 forms a complex with S13 that binds strongly to the 16S ribosomal RNA. This Helicobacter pylori (strain ATCC 700392 / 26695) (Campylobacter pylori) protein is Small ribosomal subunit protein uS19 (rpsS).